The chain runs to 1375 residues: ARF guanine-nucleotide exchange factor GNL2 (1375 aa).

Residues 486–676 (HIRVRKAQKR…SELFQSIATN (191 aa)) form the SEC7 domain. Glutamate 590 is a catalytic residue.

In terms of assembly, homodimer. In terms of tissue distribution, preferentially expressed in mature pollen grains and growing pollen tubes.

The protein localises to the cytoplasm. It is found in the cytosol. It localises to the membrane. In terms of biological role, activates the ARF proteins by exchanging bound GDP for free GTP. Plays a role in vesicular protein sorting. Essential for pollen germination. This chain is ARF guanine-nucleotide exchange factor GNL2 (GNL2), found in Arabidopsis thaliana (Mouse-ear cress).